The sequence spans 148 residues: uncharacterized protein (148 aa).

The signal sequence occupies residues 1–18 (MKIILTVLAGVGLLSAGG). A lipid anchor (N-palmitoyl cysteine) is attached at Cys19. Cys19 carries S-diacylglycerol cysteine lipidation.

The protein localises to the cell membrane. This is an uncharacterized protein from Bacillus subtilis (strain 168).